Reading from the N-terminus, the 471-residue chain is Heat shock 70 kDa protein 13 (471 aa).

Residues 1 to 22 (MAREMTILGSAVLTLLLAGYLA) form the signal peptide. The disordered stretch occupies residues 314 to 352 (EEQDRKEPHSSDTELPKDKLSSADDHRVNSGFGRGLSDK). Over residues 315–341 (EQDRKEPHSSDTELPKDKLSSADDHRV) the composition is skewed to basic and acidic residues.

It belongs to the heat shock protein 70 family. As to quaternary structure, binds UBQLN2.

The protein localises to the microsome. Its subcellular location is the endoplasmic reticulum. In terms of biological role, has peptide-independent ATPase activity. The sequence is that of Heat shock 70 kDa protein 13 (HSPA13) from Pongo abelii (Sumatran orangutan).